We begin with the raw amino-acid sequence, 404 residues long: 6-hydroxytryptophan 2,3-dioxygenase fscD (404 aa).

His341 serves as a coordination point for heme b.

This sequence belongs to the indoleamine 2,3-dioxygenase family. Heme is required as a cofactor.

The protein operates within secondary metabolite biosynthesis. Its function is as follows. 6-hydroxytryptophan 2,3-dioxygenase; part of the fragmented gene cluster that mediates the biosynthesis of fusarochromene, a tryptophan-derived metabolite closely related to a group of mycotoxins including fusarochromanone. Within the pathway, fscD is responsible of the cleavage of the pyrrole ring of 6-hydroxytryptophan. The first step of the pathway is the epimerization of L-tryptophan to D-tryptophan in the presence of the NRPS-like tryptophan epimerase fscC. D-tryptophan is subsequently hydroxylated by the tryptophan 6-hydroxylase fscE to yield 6-hydroxytryptophan. The pyrrole ring undergoes cleavaged by the tryptophan 2,3-dioxygenase fscD and is finally converted to 4-hydroxykyrunenine by the hydrolase fscH. The NRPS-like oxidoreductase fscA reduces the carboxyl group to primary alcohol and the DMATS-type prenyltransferase fscG performs prenylation, followed by the formation of a chromene ring catalyzed by the oxidoreductase fscI, which leads to desacetylfusarochromene. Epoxidation by fscF and rearrangement reactions of chromene double bonds convert compound desacetylfusarochromene to fusarochromanones. Although specific acetyltransferases were not found near the fsc gene cluster, several predicted enzymes containing the N-acetyltransferase superfamily domain are present in the genome of F.equiseti. These predicted enzymes may have the potential to convert desacetylfusarochromene to fusarochromene. This is 6-hydroxytryptophan 2,3-dioxygenase fscD from Fusarium equiseti (Fusarium scirpi).